We begin with the raw amino-acid sequence, 326 residues long: Porphobilinogen deaminase (326 aa).

Position 251 is an S-(dipyrrolylmethanemethyl)cysteine (Cys-251).

The protein belongs to the HMBS family. It depends on dipyrromethane as a cofactor.

The catalysed reaction is 4 porphobilinogen + H2O = hydroxymethylbilane + 4 NH4(+). Its pathway is porphyrin-containing compound metabolism; protoporphyrin-IX biosynthesis; coproporphyrinogen-III from 5-aminolevulinate: step 2/4. In terms of biological role, tetrapolymerization of the monopyrrole PBG into the hydroxymethylbilane pre-uroporphyrinogen in several discrete steps. In Eremothecium gossypii (strain ATCC 10895 / CBS 109.51 / FGSC 9923 / NRRL Y-1056) (Yeast), this protein is Porphobilinogen deaminase (HEM3).